Reading from the N-terminus, the 151-residue chain is Deoxyuridine 5'-triphosphate nucleotidohydrolase (151 aa).

Residues 70-72 (RSG), Asn-83, 87-89 (LID), and Met-97 contribute to the substrate site.

This sequence belongs to the dUTPase family. The cofactor is Mg(2+).

The catalysed reaction is dUTP + H2O = dUMP + diphosphate + H(+). The protein operates within pyrimidine metabolism; dUMP biosynthesis; dUMP from dCTP (dUTP route): step 2/2. Its function is as follows. This enzyme is involved in nucleotide metabolism: it produces dUMP, the immediate precursor of thymidine nucleotides and it decreases the intracellular concentration of dUTP so that uracil cannot be incorporated into DNA. The chain is Deoxyuridine 5'-triphosphate nucleotidohydrolase from Pseudomonas putida (strain ATCC 47054 / DSM 6125 / CFBP 8728 / NCIMB 11950 / KT2440).